A 131-amino-acid chain; its full sequence is M-zodatoxin-Lt8o (131 aa).

A signal peptide spans 1–20; it reads MKYFVVALALVAAFACIAES. A propeptide spanning residues 21-60 is cleaved from the precursor; the sequence is KPAESEHELAEVEEENELADLEDAVWLEHLADLSDLEEAR.

This sequence belongs to the cationic peptide 06 (cytoinsectotoxin) family. Expressed by the venom gland.

It localises to the secreted. Its function is as follows. Insecticidal, cytolytic and antimicrobial peptide. Forms voltage-dependent, ion-permeable channels in membranes. At high concentration causes cell membrane lysis. This is M-zodatoxin-Lt8o (cit 1-14) from Lachesana tarabaevi (Spider).